Reading from the N-terminus, the 589-residue chain is Zinc finger protein 131 (589 aa).

Positions 34–98 (TDITLIVDGH…TYTAKLMIQG (65 aa)) constitute a BTB domain. A Nuclear localization signal 1 motif is present at residues 137 to 148 (TGKNEAKKRKIA). Residues 224–234 (GDRKGQIKEDG) show a composition bias toward basic and acidic residues. The tract at residues 224 to 247 (GDRKGQIKEDGCPSDPTSKQEHMK) is disordered. 2 consecutive C2H2-type zinc fingers follow at residues 254–277 (FKCE…NCYH) and 294–316 (HVCQ…LRKH). Residues lysine 255 and lysine 261 each participate in a glycyl lysine isopeptide (Lys-Gly) (interchain with G-Cter in SUMO2) cross-link. Positions 283–294 (VSKKQRTGKKIH) match the Nuclear localization signal 2 motif. The segment at 322 to 347 (FECPNCHERFARNSTLKCHLTACQTG) adopts a C2H2-type 3; degenerate zinc-finger fold. 2 C2H2-type zinc fingers span residues 358 to 380 (YECQ…LVIH) and 386 to 409 (NHCT…SDAH). The segment covering 539–583 (NQEERESSQADAAEAAREDHEDAEDLETKPTVDSEAEKAENEDRT) has biased composition (basic and acidic residues). Residues 539 to 589 (NQEERESSQADAAEAAREDHEDAEDLETKPTVDSEAEKAENEDRTAMPVLE) are disordered. Residue lysine 567 forms a Glycyl lysine isopeptide (Lys-Gly) (interchain with G-Cter in SUMO) linkage.

The protein belongs to the krueppel C2H2-type zinc-finger protein family. Post-translationally, monosumoylated at Lys-567 by CBX4 and UHRF2. Sumoylation may potentiate ZNF131 inhibition of estrogen signaling. Sumoylation does not interfere with ubiquitination. In terms of processing, ubiquitinated.

It localises to the nucleus. Its function is as follows. May be involved in transcriptional regulation as a repressor of ESR1/ER-alpha signaling. Plays a role during development and organogenesis as well as in the function of the adult central nervous system. The chain is Zinc finger protein 131 (ZNF131) from Pongo abelii (Sumatran orangutan).